A 305-amino-acid polypeptide reads, in one-letter code: P2Y purinoceptor 14 (305 aa).

Topologically, residues 1–29 (MDNTTTTEPPKQPCTRNTLITQQIIPMLY) are extracellular. Asn-3 is a glycosylation site (N-linked (GlcNAc...) asparagine). Residues 30 to 50 (CVVFITGVLLNGISGWIFFYV) form a helical membrane-spanning segment. The Cytoplasmic portion of the chain corresponds to 51–55 (PSSKS). The helical transmembrane segment at 56 to 76 (FIIYLKNIVVADFLMGLTFPF) threads the bilayer. At 77–96 (KVLSDSGLGPWQLNVFVFRV) the chain is on the extracellular side. A helical transmembrane segment spans residues 97 to 117 (SAVIFYVNMYVSIAFFGLISF). The Cytoplasmic portion of the chain corresponds to 118 to 139 (DRYYKIVKPLLVSIVQSVNYSK). Residues 140-160 (VLSVLVWVLMLLLAVPNIILT) traverse the membrane as a helical segment. Asn-161 is a glycosylation site (N-linked (GlcNAc...) asparagine). At 161–188 (NQSVKDVTNIQCMELKNELGRKWHKASN) the chain is on the extracellular side. Residues 189–209 (YVFVSIFWIVFLLLTVFYMAI) traverse the membrane as a helical segment. Residues 210–234 (TRKIFKSHLKSRKNSISVKRKSSRN) lie on the Cytoplasmic side of the membrane. The chain crosses the membrane as a helical span at residues 235–255 (IFSIVLAFVACFAPYHVARIP). Residues 256 to 278 (YTKSQTEGHYSCQAKETLLYTKE) are Extracellular-facing. Residues 279 to 299 (FTLLLSAANVCLDPISISSYA) traverse the membrane as a helical segment. Residues 300-305 (SRLEKS) are Cytoplasmic-facing.

It belongs to the G-protein coupled receptor 1 family.

It is found in the cell membrane. Its function is as follows. Receptor for UDP-glucose coupled to G-proteins. The chain is P2Y purinoceptor 14 (P2ry14) from Rattus norvegicus (Rat).